A 70-amino-acid chain; its full sequence is MNQRKEIELLMFDVLPYMANMEFIKELLESVNSLEELEQKVRELLEKETDITKKTDLKILLEKIEERKNK.

This is an uncharacterized protein from Methanocaldococcus jannaschii (strain ATCC 43067 / DSM 2661 / JAL-1 / JCM 10045 / NBRC 100440) (Methanococcus jannaschii).